Here is a 617-residue protein sequence, read N- to C-terminus: KIF-binding protein (617 aa).

The segment at Ala-48–Gly-83 is disordered. Ser-174 carries the phosphoserine modification.

This sequence belongs to the KIF-binding protein family. Interacts with KIF1B; positively regulates KIF1B microtubule motor activity. Interacts with STMN2.

The protein resides in the cytoplasm. It is found in the cytoskeleton. Its function is as follows. Activator of KIF1B plus-end-directed microtubule motor activity. Required for organization of axonal microtubules, and axonal outgrowth and maintenance during peripheral and central nervous system development. This Rattus norvegicus (Rat) protein is KIF-binding protein (Kifbp).